The sequence spans 211 residues: Pyridoxine/pyridoxamine 5'-phosphate oxidase (211 aa).

Substrate-binding positions include Arg-7–Tyr-10 and Lys-65. Residues Arg-60–Lys-65, Tyr-75–Thr-76, Arg-81, Lys-82, and Gln-104 each bind FMN. 3 residues coordinate substrate: Tyr-122, Arg-126, and Ser-130. FMN contacts are provided by residues Gln-139 to Ser-140 and Trp-184. Arg-190–His-192 lines the substrate pocket. Arg-194 provides a ligand contact to FMN.

Belongs to the pyridoxamine 5'-phosphate oxidase family. Homodimer. Requires FMN as cofactor.

The enzyme catalyses pyridoxamine 5'-phosphate + O2 + H2O = pyridoxal 5'-phosphate + H2O2 + NH4(+). It carries out the reaction pyridoxine 5'-phosphate + O2 = pyridoxal 5'-phosphate + H2O2. Its pathway is cofactor metabolism; pyridoxal 5'-phosphate salvage; pyridoxal 5'-phosphate from pyridoxamine 5'-phosphate: step 1/1. It functions in the pathway cofactor metabolism; pyridoxal 5'-phosphate salvage; pyridoxal 5'-phosphate from pyridoxine 5'-phosphate: step 1/1. In terms of biological role, catalyzes the oxidation of either pyridoxine 5'-phosphate (PNP) or pyridoxamine 5'-phosphate (PMP) into pyridoxal 5'-phosphate (PLP). This is Pyridoxine/pyridoxamine 5'-phosphate oxidase from Aeromonas hydrophila subsp. hydrophila (strain ATCC 7966 / DSM 30187 / BCRC 13018 / CCUG 14551 / JCM 1027 / KCTC 2358 / NCIMB 9240 / NCTC 8049).